We begin with the raw amino-acid sequence, 1055 residues long: Ephrin type-B receptor 2 (1055 aa).

Residues 1-18 (MALRRLGAALLLLPLLAA) form the signal peptide. Over 19–543 (VEETLMDSTT…QTSIQEKLPL (525 aa)) the chain is Extracellular. The 183-residue stretch at 20–202 (EETLMDSTTA…FYRKCPRIIQ (183 aa)) folds into the Eph LBD domain. 2 disulfides stabilise this stretch: C62/C184 and C97/C107. N265, N336, N428, and N482 each carry an N-linked (GlcNAc...) asparagine glycan. 2 Fibronectin type-III domains span residues 324–434 (IPSA…TNQA) and 435–530 (APSA…TMTE). The helical transmembrane segment at 544 to 564 (IIGSSAAGLVFLIAVVVIAIV) threads the bilayer. The Cytoplasmic segment spans residues 565-1055 (CNRRGFERAD…KESNDCSCGG (491 aa)). Residues 621–884 (VKIEQVIGAG…QIVNTLDKMI (264 aa)) enclose the Protein kinase domain. ATP is bound by residues 627-635 (IGAGEFGEV) and K653. The Proton acceptor role is filled by D746. K891 is covalently cross-linked (Glycyl lysine isopeptide (Lys-Gly) (interchain with G-Cter in ubiquitin)). The SAM domain maps to 913-977 (TSFNTVDEWL…LNSIQVMRAQ (65 aa)). Phosphoserine is present on residues S983 and V984. Positions 984–986 (VEG) match the PDZ-binding (in isoform 2) motif. The disordered stretch occupies residues 990 to 1055 (ARRPRATGRT…KESNDCSCGG (66 aa)). Basic residues predominate over residues 991–1002 (RRPRATGRTKRC). The span at 1025–1049 (KKTDPGRGREIQGIFFKEDSHKESN) shows a compositional bias: basic and acidic residues.

The protein belongs to the protein kinase superfamily. Tyr protein kinase family. Ephrin receptor subfamily. In terms of assembly, heterotetramer upon binding of the ligand. The heterotetramer is composed of an ephrin dimer and a receptor dimer. Interacts (via PDZ-binding motif) with GRIP1 and PICK1 (via PDZ domain). Interacts with ARHGEF15; mediates ARHGEF15 phosphorylation, ubiquitination and degradation by the proteasome. Interacts with AQP1; involved in endolymph production in the inner ear. Interacts with SPSB1 and SPSB4. The phosphorylated form interacts with RASA1 (via SH2 domain 1). Interacts with EFNA5. Interacts with SH2D3C. In terms of processing, autophosphorylated; ligand binding stimulates autophosphorylation on tyrosine residues. Polyubiquitinated; ligand binding stimulates ubiquitination. Ubiquitinated by RNF186 at Lys-891, mainly through 'Lys-27'-linked polyubiquitin chains. Ubiquitinated by CRL2(KLHDC2) E3 ligase complex. Post-translationally, ligand binding induces cleavage by matrix metalloproteinases (MMPs) such as MMP7/MMP9, producing an EphB2/N-terminal fragment (NTF) and a C-terminal long fragment (EphB2-LF). EphB2-LF is further cleaved by MMPs, producing EphB2/CTF1 which is further cleaved by the PS1/gamma-secretase producing EphB2/CTF2. As to expression, brain, heart, lung, kidney, placenta, pancreas, liver and skeletal muscle. Preferentially expressed in fetal brain.

Its subcellular location is the cell membrane. It is found in the cell projection. The protein localises to the axon. It localises to the dendrite. The enzyme catalyses L-tyrosyl-[protein] + ATP = O-phospho-L-tyrosyl-[protein] + ADP + H(+). Receptor tyrosine kinase which binds promiscuously transmembrane ephrin-B family ligands residing on adjacent cells, leading to contact-dependent bidirectional signaling into neighboring cells. The signaling pathway downstream of the receptor is referred to as forward signaling while the signaling pathway downstream of the ephrin ligand is referred to as reverse signaling. Functions in axon guidance during development. Involved in the guidance of commissural axons, that form a major interhemispheric connection between the 2 temporal lobes of the cerebral cortex. Also involved in guidance of contralateral inner ear efferent growth cones at the midline and of retinal ganglion cell axons to the optic disk. In addition to axon guidance, also regulates dendritic spines development and maturation and stimulates the formation of excitatory synapses. Upon activation by EFNB1, abolishes the ARHGEF15-mediated negative regulation on excitatory synapse formation. Controls other aspects of development including angiogenesis, palate development and in inner ear development through regulation of endolymph production. Forward and reverse signaling through the EFNB2/EPHB2 complex regulate movement and adhesion of cells that tubularize the urethra and septate the cloaca. May function as a tumor suppressor. May be involved in the regulation of platelet activation and blood coagulation. This chain is Ephrin type-B receptor 2 (EPHB2), found in Homo sapiens (Human).